We begin with the raw amino-acid sequence, 478 residues long: Methylenetetrahydrofolate--tRNA-(uracil-5-)-methyltransferase TrmFO (478 aa).

16–21 provides a ligand contact to FAD; the sequence is GAGLAG. The segment at 429–448 is disordered; sequence PLANPPTKGPDGKRLRGPEK. Over residues 438–448 the composition is skewed to basic and acidic residues; it reads PDGKRLRGPEK.

The protein belongs to the MnmG family. TrmFO subfamily. Requires FAD as cofactor.

It is found in the cytoplasm. It carries out the reaction uridine(54) in tRNA + (6R)-5,10-methylene-5,6,7,8-tetrahydrofolate + NADH + H(+) = 5-methyluridine(54) in tRNA + (6S)-5,6,7,8-tetrahydrofolate + NAD(+). The catalysed reaction is uridine(54) in tRNA + (6R)-5,10-methylene-5,6,7,8-tetrahydrofolate + NADPH + H(+) = 5-methyluridine(54) in tRNA + (6S)-5,6,7,8-tetrahydrofolate + NADP(+). Its function is as follows. Catalyzes the folate-dependent formation of 5-methyl-uridine at position 54 (M-5-U54) in all tRNAs. The polypeptide is Methylenetetrahydrofolate--tRNA-(uracil-5-)-methyltransferase TrmFO (Rhodopseudomonas palustris (strain ATCC BAA-98 / CGA009)).